The chain runs to 397 residues: 2,3-bisphosphoglycerate-independent phosphoglycerate mutase (397 aa).

Belongs to the BPG-independent phosphoglycerate mutase family. A-PGAM subfamily.

It carries out the reaction (2R)-2-phosphoglycerate = (2R)-3-phosphoglycerate. It functions in the pathway carbohydrate degradation; glycolysis; pyruvate from D-glyceraldehyde 3-phosphate: step 3/5. In terms of biological role, catalyzes the interconversion of 2-phosphoglycerate and 3-phosphoglycerate. This is 2,3-bisphosphoglycerate-independent phosphoglycerate mutase from Methanosarcina acetivorans (strain ATCC 35395 / DSM 2834 / JCM 12185 / C2A).